We begin with the raw amino-acid sequence, 42 residues long: Gastric inhibitory polypeptide (42 aa).

Belongs to the glucagon family.

It is found in the secreted. Potent stimulator of insulin secretion and relatively poor inhibitor of gastric acid secretion. The chain is Gastric inhibitory polypeptide (GIP) from Bos taurus (Bovine).